The primary structure comprises 857 residues: Protein STICHEL-like 2 (857 aa).

Residue 280–287 (GPRGTGKT) coordinates ATP. Residues cysteine 299, cysteine 309, cysteine 312, and cysteine 315 each coordinate Zn(2+). Positions 544–576 (LTRHTSEEEMQKLRNALKILSDAEKHLRASKNQ) form a coiled coil. Disordered regions lie at residues 593–629 (SSFA…DAEK) and 787–845 (ASSR…SSRL). A compositionally biased stretch (basic and acidic residues) spans 599–610 (ENGRNQINKDVE). The span at 834 to 843 (QSETQNSKSS) shows a compositional bias: polar residues.

This sequence belongs to the DnaX/STICHEL family.

The sequence is that of Protein STICHEL-like 2 from Arabidopsis thaliana (Mouse-ear cress).